The following is a 184-amino-acid chain: Flavin prenyltransferase UbiX (184 aa).

Residues 9-11 (GAS), Ser-34, 85-88 (SMKT), and Arg-120 each bind FMN. Dimethylallyl phosphate is bound by residues Tyr-150 and Arg-166.

This sequence belongs to the UbiX/PAD1 family.

The catalysed reaction is dimethylallyl phosphate + FMNH2 = prenylated FMNH2 + phosphate. In terms of biological role, flavin prenyltransferase that catalyzes the synthesis of the prenylated FMN cofactor (prenyl-FMN) for 4-hydroxy-3-polyprenylbenzoic acid decarboxylase UbiD. The prenyltransferase is metal-independent and links a dimethylallyl moiety from dimethylallyl monophosphate (DMAP) to the flavin N5 and C6 atoms of FMN. In Methanocaldococcus jannaschii (strain ATCC 43067 / DSM 2661 / JAL-1 / JCM 10045 / NBRC 100440) (Methanococcus jannaschii), this protein is Flavin prenyltransferase UbiX.